Here is an 86-residue protein sequence, read N- to C-terminus: Cardiotoxin homolog TA-ctx-like (86 aa).

A signal peptide spans 1 to 21 (MKTLLLTLVVLTIACLDLGYT). 4 disulfides stabilise this stretch: Cys24-Cys45, Cys38-Cys62, Cys66-Cys78, and Cys79-Cys84.

Belongs to the three-finger toxin family. Short-chain subfamily. Orphan group IX sub-subfamily. Expressed by the venom gland.

It is found in the secreted. The protein is Cardiotoxin homolog TA-ctx-like of Bungarus multicinctus (Many-banded krait).